A 149-amino-acid chain; its full sequence is Large ribosomal subunit protein bL9 (149 aa).

The protein belongs to the bacterial ribosomal protein bL9 family.

In terms of biological role, binds to the 23S rRNA. The sequence is that of Large ribosomal subunit protein bL9 from Klebsiella pneumoniae (strain 342).